Consider the following 191-residue polypeptide: Protein Ves (191 aa).

Belongs to the Ves family.

The sequence is that of Protein Ves from Escherichia coli O127:H6 (strain E2348/69 / EPEC).